A 245-amino-acid polypeptide reads, in one-letter code: Proteasome subunit alpha type-7-1B (245 aa).

This sequence belongs to the peptidase T1A family. As to quaternary structure, the 26S proteasome consists of a 20S proteasome core and two 19S regulatory subunits. The 20S proteasome core is composed of 28 subunits that are arranged in four stacked rings, resulting in a barrel-shaped structure. The two end rings are each formed by seven alpha subunits, and the two central rings are each formed by seven beta subunits. The catalytic chamber with the active sites is on the inside of the barrel. As to expression, testis specific.

It is found in the cytoplasm. The protein localises to the nucleus. In terms of biological role, the proteasome is a multicatalytic proteinase complex which is characterized by its ability to cleave peptides with Arg, Phe, Tyr, Leu, and Glu adjacent to the leaving group at neutral or slightly basic pH. The proteasome has an ATP-dependent proteolytic activity. This chain is Proteasome subunit alpha type-7-1B (Pros28.1B), found in Drosophila virilis (Fruit fly).